A 248-amino-acid polypeptide reads, in one-letter code: Probable transcriptional regulatory protein RHECIAT_CH0003714 (248 aa).

The protein belongs to the TACO1 family.

Its subcellular location is the cytoplasm. This chain is Probable transcriptional regulatory protein RHECIAT_CH0003714, found in Rhizobium etli (strain CIAT 652).